The chain runs to 681 residues: Conserved oligomeric Golgi complex subunit 2 (681 aa).

Belongs to the COG2 family. Component of the conserved oligomeric Golgi complex which is composed of eight different subunits and is required for normal Golgi morphology and localization.

Its subcellular location is the golgi apparatus membrane. Required for normal Golgi morphology and function. The protein is Conserved oligomeric Golgi complex subunit 2 (cogc-2) of Caenorhabditis elegans.